A 367-amino-acid polypeptide reads, in one-letter code: Voltage-gated potassium channel subunit beta-2 (367 aa).

A phosphoserine mark is found at Ser-9, Ser-14, and Ser-20. Arg-28 carries the asymmetric dimethylarginine; alternate modification. The residue at position 28 (Arg-28) is an Omega-N-methylarginine; alternate. Ser-31 carries the post-translational modification Phosphoserine. Positions 56, 57, 63, and 85 each coordinate NADP(+). Tyr-90 (proton donor/acceptor) is an active-site residue. Position 112 is a phosphoserine (Ser-112). An N6-acetyllysine modification is found at Lys-124. Residues Asn-158, Ser-188, Arg-189, Gln-214, Trp-243, Ser-244, Pro-245, Leu-246, Ala-247, Cys-248, Lys-254, Tyr-262, Arg-264, Gly-323, Ser-325, Gln-329, Glu-332, and Asn-333 each coordinate NADP(+).

The protein belongs to the shaker potassium channel beta subunit family. Homotetramer. Interaction with tetrameric potassium channel alpha subunits gives rise to a heterooctamer. Identified in potassium channel complexes containing KCNA1, KCNA2, KCNA4, KCNA5, KCNA6, KCNAB1, KCNAB2 and KCND3. Interacts (in unphosphorylated form) with MAPRE1. Forms a ternary complex with SQSTM1 and PRKCZ. Phosphorylated by PRKCZ; may be regulated by incorporation in a complex composed of PRKCZ and SQSTM1. As to expression, detected in the juxtaparanodal region of nodes of Ranvier in myelinated nerve fibers in the spinal cord (at protein level).

It localises to the cytoplasm. It is found in the membrane. The protein localises to the cell membrane. Its subcellular location is the cell projection. The protein resides in the axon. It localises to the synapse. It is found in the synaptosome. The protein localises to the cytoskeleton. The catalysed reaction is hydroxyacetone + NADP(+) = methylglyoxal + NADPH + H(+). The enzyme catalyses (E)-4-oxonon-2-en-1-ol + NADP(+) = (E)-4-oxonon-2-enal + NADPH + H(+). In terms of biological role, regulatory subunit of the voltage-gated potassium (Kv) Shaker channels composed of pore-forming and potassium-conducting alpha subunits and of regulatory beta subunits. The beta-2/KCNAB2 cytoplasmic subunit promotes potassium channel closure via a mechanism that does not involve physical obstruction of the channel pore. Promotes the inactivation of Kv1.4/KCNA4 and Kv1.5/KCNA5 alpha subunit-containing channels. Displays nicotinamide adenine dinucleotide phosphate (NADPH)-dependent aldoketoreductase activity by catalyzing the NADPH-dependent reduction of a wide range of aldehyde and ketone substrates. Substrate specificity includes methylglyoxal, 9,10-phenanthrenequinone, prostaglandin J2, 4-nitrobenzaldehyde, 4-nitroacetophenone and 4-oxo-trans-2-nonenal (in vitro, no physiological substrate identified yet). The binding of oxidized and reduced nucleotide alters Kv channel gating and may contribute to dynamic fine tuning of cell excitability. Contributes to the regulation of nerve signaling, and prevents neuronal hyperexcitability. This Bos taurus (Bovine) protein is Voltage-gated potassium channel subunit beta-2 (KCNAB2).